The sequence spans 565 residues: 4-coumarate--CoA ligase-like 2 (565 aa).

Residues serine 221, serine 222, glycine 223, threonine 224, threonine 225, and lysine 229 each coordinate ATP. Phenylalanine 265 contacts (E)-4-coumaroyl-AMP. Residue lysine 286 coordinates CoA. An SBD1 region spans residues 288–359; that stretch reads DMAKLLSAVE…ENYPKVKILQ (72 aa). Residues glycine 337, glutamine 359, glycine 360, and threonine 364 each coordinate (E)-4-coumaroyl-AMP. ATP contacts are provided by glutamine 359, glycine 360, threonine 364, aspartate 445, and arginine 460. An SBD2 region spans residues 360–424; sequence GYGLTESTAI…IRSPTVMKGY (65 aa). The (E)-4-coumaroyl-AMP site is built by lysine 462 and lysine 466. Glycine 469 is a CoA binding site. Lysine 551 lines the ATP pocket. The Microbody targeting signal motif lies at 563-565; that stretch reads SKL.

Belongs to the ATP-dependent AMP-binding enzyme family. The cofactor is Mg(2+).

Its subcellular location is the peroxisome. It carries out the reaction (E)-4-coumarate + ATP + CoA = (E)-4-coumaroyl-CoA + AMP + diphosphate. It catalyses the reaction (E)-4-coumarate + ATP + H(+) = (E)-4-coumaroyl-AMP + diphosphate. The catalysed reaction is (E)-4-coumaroyl-AMP + CoA = (E)-4-coumaroyl-CoA + AMP + H(+). In terms of biological role, carboxylate--CoA ligase that may use 4-coumarate as substrate. Follows a two-step reaction mechanism, wherein the carboxylate substrate first undergoes adenylation by ATP, followed by a thioesterification in the presence of CoA to yield the final CoA thioester. The sequence is that of 4-coumarate--CoA ligase-like 2 from Arabidopsis thaliana (Mouse-ear cress).